Reading from the N-terminus, the 473-residue chain is Glutamate--tRNA ligase (473 aa).

The 'HIGH' region signature appears at 10 to 20 (PSPTGYLHLGN). 4 residues coordinate Zn(2+): Cys-98, Cys-100, Cys-125, and His-127. Positions 242-246 (KLSKR) match the 'KMSKS' region motif. Residue Lys-245 participates in ATP binding.

This sequence belongs to the class-I aminoacyl-tRNA synthetase family. Glutamate--tRNA ligase type 1 subfamily. Monomer. It depends on Zn(2+) as a cofactor.

Its subcellular location is the cytoplasm. The catalysed reaction is tRNA(Glu) + L-glutamate + ATP = L-glutamyl-tRNA(Glu) + AMP + diphosphate. In terms of biological role, catalyzes the attachment of glutamate to tRNA(Glu) in a two-step reaction: glutamate is first activated by ATP to form Glu-AMP and then transferred to the acceptor end of tRNA(Glu). This Aquifex aeolicus (strain VF5) protein is Glutamate--tRNA ligase.